A 234-amino-acid chain; its full sequence is Glutathione S-transferase U16 (234 aa).

Positions 5–85 (EEVKLLGVWY…YIDETWNSSA (81 aa)) constitute a GST N-terminal domain. Glutathione contacts are provided by residues 15 to 16 (SP), 42 to 43 (SK), 56 to 57 (KV), and 69 to 70 (ES). The GST C-terminal domain occupies 92 to 219 (HPYDRALARF…APEIEKVAEF (128 aa)).

The protein belongs to the GST superfamily. Tau family.

It is found in the cytoplasm. It localises to the cytosol. It carries out the reaction RX + glutathione = an S-substituted glutathione + a halide anion + H(+). Functionally, may be involved in the conjugation of reduced glutathione to a wide number of exogenous and endogenous hydrophobic electrophiles and have a detoxification role against certain herbicides. This is Glutathione S-transferase U16 (GSTU16) from Arabidopsis thaliana (Mouse-ear cress).